The sequence spans 562 residues: Phosphoacetylglucosamine mutase (562 aa).

The Phosphoserine intermediate role is filled by serine 74. Mg(2+)-binding residues include serine 74, aspartate 291, aspartate 293, and aspartate 295. Substrate is bound by residues 395-397, 526-530, and arginine 535; these read EAN and RPSGT.

This sequence belongs to the phosphohexose mutase family. The cofactor is Mg(2+).

The enzyme catalyses N-acetyl-alpha-D-glucosamine 1-phosphate = N-acetyl-D-glucosamine 6-phosphate. It participates in nucleotide-sugar biosynthesis; UDP-N-acetyl-alpha-D-glucosamine biosynthesis; N-acetyl-alpha-D-glucosamine 1-phosphate from alpha-D-glucosamine 6-phosphate (route I): step 2/2. Its function is as follows. Interconverts GlcNAc-6-P and GlcNAc-1-P. The protein is Phosphoacetylglucosamine mutase of Oryza sativa subsp. japonica (Rice).